A 966-amino-acid chain; its full sequence is MSSATSPIILKWDPKSLEIRTLTVESLLEPLVTQVTTLVNTSNKGPSGKKKGRSKKAHVLAASVEQATQNFLEKGEQIAKESQDLKDELISAVEDVRKQGETMRIASSEFADDPCSSVKRGTMVRAARALLSAVTRLLILADMADVMRLLTHLKIVEEALEMVKNATNEQDLAHRFKEFGKEMVKLNYVAARRQQELKDPHCRDEMAAARGALKKNATMLYTASQAFLRHSDVAATRANRDYVFKQVQEAIAGISNAAQATSPTDEKQAHTGIGELAAALNEFDNKIILDPLTFSEARFRPSLEERLESIISGAALMADSSCTRDDRRERIVAECNSVRQALQDLLSEYMNNCRYGTWMDESSKSGRKEKGDPLNIAIDKMTKKTRDLRRQLRKAVMDHISDSFLETNVPLLVLIEAAKSGNEKEVKEYAQVFREHANKLVEVANLACSISNNEEGVKLVRMAATQIDSLCPQVINAALTLAARPQSKVAQDNMDVFKDQWEKQVRVLTEAVDDITSVDDFLSVSENHILEDVNKCVIALQEGDVDTLDRTAGAIRGRAARVIHIINAEMENYEAGVYTEKVLETTKLLSETVMPRFAEQVEVAIEALSTNIPQPFEENEFIDASRLVYDGVRDIRKAVLMIRTPEELEDDSDFEQEDYDVRSRTSVQTEDDQLIAGQSARAIMAQLPQEEKAKIAEQVEIFHQEKSKLDAEVAKWDDSGNDIIVLAKQMCMIMMEMTDFTRGKGPLKNTSDVINAAKKIAEAGSRMDKLARAVADQCPDSACKQDLLAYLQRIALYCHQLNICSKVKAEVQNLGGELIVSGTGVQSTFTTFYEVAGDVIAGGRDSQLSLDLLPSCTEGSLFGSGSRDSTMLDSATSLIQAAKNLMNAVVLTVKASYVASTKYQKVYGTAAVNSPVVSWKMKAPEKKPLVKREKPEEYQTRVRRGSQKKHISPVQALSEFKAMDSF.

Residues 924-940 (PEKKPLVKREKPEEYQT) are compositionally biased toward basic and acidic residues. A disordered region spans residues 924–952 (PEKKPLVKREKPEEYQTRVRRGSQKKHIS). The span at 941-951 (RVRRGSQKKHI) shows a compositional bias: basic residues.

It belongs to the vinculin/alpha-catenin family.

It is found in the cell membrane. The protein localises to the cytoplasm. Its subcellular location is the cytoskeleton. It localises to the cell junction. The protein resides in the adherens junction. It is found in the cell projection. The protein localises to the axon. Its subcellular location is the nucleus. In terms of biological role, may function as a linker between cadherin adhesion receptors and the cytoskeleton to regulate cell-cell adhesion and differentiation in the nervous system. The polypeptide is Catenin alpha-2 (ctnna2) (Xenopus laevis (African clawed frog)).